The primary structure comprises 493 residues: Ketol-acid reductoisomerase (NADP(+)) (493 aa).

The region spanning L14 to S208 is the KARI N-terminal Rossmann domain. NADP(+) is bound by residues C45–Q48, R68, R76, S78, and D108–Q110. H132 is an active-site residue. G158 contacts NADP(+). KARI C-terminal knotted domains are found at residues S209–G345 and E346–M486. Residues D217, E221, E390, and E394 each contribute to the Mg(2+) site. S415 is a binding site for substrate.

This sequence belongs to the ketol-acid reductoisomerase family. Requires Mg(2+) as cofactor.

The enzyme catalyses (2R)-2,3-dihydroxy-3-methylbutanoate + NADP(+) = (2S)-2-acetolactate + NADPH + H(+). It carries out the reaction (2R,3R)-2,3-dihydroxy-3-methylpentanoate + NADP(+) = (S)-2-ethyl-2-hydroxy-3-oxobutanoate + NADPH + H(+). It functions in the pathway amino-acid biosynthesis; L-isoleucine biosynthesis; L-isoleucine from 2-oxobutanoate: step 2/4. The protein operates within amino-acid biosynthesis; L-valine biosynthesis; L-valine from pyruvate: step 2/4. Its function is as follows. Involved in the biosynthesis of branched-chain amino acids (BCAA). Catalyzes an alkyl-migration followed by a ketol-acid reduction of (S)-2-acetolactate (S2AL) to yield (R)-2,3-dihydroxy-isovalerate. In the isomerase reaction, S2AL is rearranged via a Mg-dependent methyl migration to produce 3-hydroxy-3-methyl-2-ketobutyrate (HMKB). In the reductase reaction, this 2-ketoacid undergoes a metal-dependent reduction by NADPH to yield (R)-2,3-dihydroxy-isovalerate. The protein is Ketol-acid reductoisomerase (NADP(+)) of Histophilus somni (strain 2336) (Haemophilus somnus).